The chain runs to 1047 residues: Protein masquerade (1047 aa).

The signal sequence occupies residues 1-30 (MPRHSSTMSRLVLPLIFSILLVSKPSPSQA). Residues 54-87 (KDCPGVCVHTLATLICYEVLDDVACPSPSMKCCI) are CLIP 1. Intrachain disulfides connect Cys56–Cys85, Cys60–Cys78, and Cys69–Cys86. Asn95 carries an N-linked (GlcNAc...) asparagine glycan. 2 stretches are compositionally biased toward low complexity: residues 98-139 (AVRA…STTP) and 148-175 (KRPA…VATA). The tract at residues 98-189 (AVRATTTPKT…KEEATKADDA (92 aa)) is disordered. A compositionally biased stretch (basic and acidic residues) spans 176-189 (KPKDKEEATKADDA). The interval 192–224 (DCTGVCVADRIAEYCEAYLTSDGLCKEGTKCCV) is CLIP 2. Disulfide bonds link Cys193–Cys222, Cys197–Cys216, and Cys206–Cys223. Asn251 is a glycosylation site (N-linked (GlcNAc...) asparagine). Residues 252 to 335 (QTLSEKSAPA…PLSNKLKSGQ (84 aa)) form a disordered region. Low complexity predominate over residues 263–280 (SSSTSTTSTTTTTSTTTT). Residue Asn287 is glycosylated (N-linked (GlcNAc...) asparagine). A compositionally biased stretch (acidic residues) spans 307–325 (AAEEEEEQETEEDGEEEEP). The interval 343-374 (ECEGECMNGIFAIFCDDIDSDAFCPGEESCCV) is CLIP 3. Disulfide bonds link Cys344/Cys372, Cys348/Cys366, and Cys357/Cys373. A disordered region spans residues 376–428 (GGASEATPSSKAPPTKPAIKHAPKPAAKPARPASPPPAPPSSTSGGGGGGDFL). The CLIP 4 stretch occupies residues 457–492 (RCPGFCLLNIMAAFCERPSVLVSTPTTCAKGSVCCD). 3 cysteine pairs are disulfide-bonded: Cys458–Cys490, Cys462–Cys484, and Cys471–Cys491. Positions 498 to 527 (APKPKLPPPTPSPTASPTAPPYVLPNTPSP) are disordered. The segment covering 501-527 (PKLPPPTPSPTASPTAPPYVLPNTPSP) has biased composition (pro residues). The segment at 532-567 (ECPGSCIVSLLSFTCFKNAEMTDLFRCKRSGQICCA) is CLIP 5. Disulfide bonds link Cys533–Cys565, Cys537–Cys558, and Cys546–Cys566. A glycan (N-linked (GlcNAc...) asparagine) is linked at Asn582. The tract at residues 583–673 (DTAYYPAPPP…TTTTTTTTPR (91 aa)) is disordered. 3 stretches are compositionally biased toward pro residues: residues 588 to 606 (PAPP…PQTP), 613 to 638 (NPPP…PPAP), and 650 to 661 (GLPPQPQPPMTT). The span at 662-672 (PPTTTTTTTTP) shows a compositional bias: low complexity. Disulfide bonds link Cys682–Cys916, Cys829–Cys845, Cys930–Cys1001, Cys961–Cys981, and Cys991–Cys1019. Asn726 and Asn794 each carry an N-linked (GlcNAc...) asparagine glycan. Residues 803–1043 (VVGGEDGENG…FIGWINQIIS (241 aa)) form a peptidase S1 region.

It belongs to the peptidase S1 family. CLIP subfamily. In terms of processing, proteolytically cleaved and thereafter secreted.

It is found in the secreted. It localises to the cell projection. The protein localises to the axon. In terms of biological role, in embryogenesis, has a role in somatic muscle attachment and in the development of axonal pathways probably by stabilizing cell-matrix adhesion and/or by acting as a competitive antagonist of serine proteases. The sequence is that of Protein masquerade from Drosophila melanogaster (Fruit fly).